The sequence spans 161 residues: Transcription elongation factor GreA (161 aa).

Residues Leu8–Arg28 adopt a coiled-coil conformation.

This sequence belongs to the GreA/GreB family.

Functionally, necessary for efficient RNA polymerase transcription elongation past template-encoded arresting sites. The arresting sites in DNA have the property of trapping a certain fraction of elongating RNA polymerases that pass through, resulting in locked ternary complexes. Cleavage of the nascent transcript by cleavage factors such as GreA or GreB allows the resumption of elongation from the new 3'terminus. GreA releases sequences of 2 to 3 nucleotides. In Mycoplasma genitalium (strain ATCC 33530 / DSM 19775 / NCTC 10195 / G37) (Mycoplasmoides genitalium), this protein is Transcription elongation factor GreA.